Reading from the N-terminus, the 556-residue chain is Arginine--tRNA ligase (556 aa).

A 'HIGH' region motif is present at residues 132 to 142; that stretch reads ANPTGSLHLGH.

The protein belongs to the class-I aminoacyl-tRNA synthetase family. In terms of assembly, monomer.

It is found in the cytoplasm. It carries out the reaction tRNA(Arg) + L-arginine + ATP = L-arginyl-tRNA(Arg) + AMP + diphosphate. The protein is Arginine--tRNA ligase of Anoxybacillus flavithermus (strain DSM 21510 / WK1).